We begin with the raw amino-acid sequence, 151 residues long: C-C motif chemokine 25 (151 aa).

An N-terminal signal peptide occupies residues 1 to 23 (MRPWLLACLVACFVGAWAPAIHA). Cystine bridges form between Cys-30–Cys-58 and Cys-31–Cys-75. A disordered region spans residues 93–151 (RNKKDSKPHHSGRRFFQGPQSGVRKLSSGTSRPLLLKFSGPTRSSKRKASLLTTAIPGP).

The protein belongs to the intercrine beta (chemokine CC) family.

It localises to the secreted. Potentially involved in T-cell development. Recombinant protein shows chemotactic activity on thymocytes, macrophages, THP-1 cells, and dendritics cells but is inactive on peripheral blood lymphocytes and neutrophils. Binds to CCR9. Binds to atypical chemokine receptor ACKR4 and mediates the recruitment of beta-arrestin (ARRB1/2) to ACKR4. The polypeptide is C-C motif chemokine 25 (CCL25) (Sus scrofa (Pig)).